The chain runs to 301 residues: Glycine--tRNA ligase alpha subunit (301 aa).

Belongs to the class-II aminoacyl-tRNA synthetase family. In terms of assembly, tetramer of two alpha and two beta subunits.

The protein resides in the cytoplasm. It catalyses the reaction tRNA(Gly) + glycine + ATP = glycyl-tRNA(Gly) + AMP + diphosphate. The protein is Glycine--tRNA ligase alpha subunit of Shewanella baltica (strain OS223).